The chain runs to 318 residues: Malonyl CoA-acyl carrier protein transacylase, mitochondrial (318 aa).

The protein belongs to the FabD family.

Its subcellular location is the mitochondrion. It catalyses the reaction holo-[ACP] + malonyl-CoA = malonyl-[ACP] + CoA. The protein operates within lipid metabolism; fatty acid biosynthesis. Functionally, involved in biosynthesis of fatty acids in mitochondria. In Schizosaccharomyces pombe (strain 972 / ATCC 24843) (Fission yeast), this protein is Malonyl CoA-acyl carrier protein transacylase, mitochondrial (mct1).